A 27-amino-acid chain; its full sequence is Trypsin inhibitor 5 (27 aa).

Cystine bridges form between Cys-1/Cys-18, Cys-8/Cys-20, and Cys-14/Cys-26.

The protein localises to the secreted. In terms of biological role, inhibits trypsin. This Sechium edule (Chayote) protein is Trypsin inhibitor 5.